We begin with the raw amino-acid sequence, 542 residues long: Chaperonin GroEL (542 aa).

ATP contacts are provided by residues 29–32, 86–90, glycine 413, 476–478, and aspartate 492; these read TLGP, DGTTT, and NAA.

Belongs to the chaperonin (HSP60) family. In terms of assembly, forms a cylinder of 14 subunits composed of two heptameric rings stacked back-to-back. Interacts with the co-chaperonin GroES.

It localises to the cytoplasm. It carries out the reaction ATP + H2O + a folded polypeptide = ADP + phosphate + an unfolded polypeptide.. Its function is as follows. Together with its co-chaperonin GroES, plays an essential role in assisting protein folding. The GroEL-GroES system forms a nano-cage that allows encapsulation of the non-native substrate proteins and provides a physical environment optimized to promote and accelerate protein folding. In Lactococcus lactis subsp. lactis (strain IL1403) (Streptococcus lactis), this protein is Chaperonin GroEL.